Here is a 37-residue protein sequence, read N- to C-terminus: Large ribosomal subunit protein bL36 (37 aa).

Belongs to the bacterial ribosomal protein bL36 family.

The sequence is that of Large ribosomal subunit protein bL36 from Laribacter hongkongensis (strain HLHK9).